Reading from the N-terminus, the 367-residue chain is Queuine tRNA-ribosyltransferase (367 aa).

Residue aspartate 91 is the Proton acceptor of the active site. Residues 91-95 (DSGGF), aspartate 145, glutamine 188, and glycine 215 each bind substrate. Aspartate 265 serves as the catalytic Nucleophile. An RNA binding; important for wobble base 34 recognition region spans residues 270–274 (TRVAR). Positions 303, 305, 308, and 334 each coordinate Zn(2+).

It belongs to the queuine tRNA-ribosyltransferase family. As to quaternary structure, homodimer. Within each dimer, one monomer is responsible for RNA recognition and catalysis, while the other monomer binds to the replacement base PreQ1. The cofactor is Zn(2+).

The enzyme catalyses 7-aminomethyl-7-carbaguanine + guanosine(34) in tRNA = 7-aminomethyl-7-carbaguanosine(34) in tRNA + guanine. It participates in tRNA modification; tRNA-queuosine biosynthesis. Its function is as follows. Catalyzes the base-exchange of a guanine (G) residue with the queuine precursor 7-aminomethyl-7-deazaguanine (PreQ1) at position 34 (anticodon wobble position) in tRNAs with GU(N) anticodons (tRNA-Asp, -Asn, -His and -Tyr). Catalysis occurs through a double-displacement mechanism. The nucleophile active site attacks the C1' of nucleotide 34 to detach the guanine base from the RNA, forming a covalent enzyme-RNA intermediate. The proton acceptor active site deprotonates the incoming PreQ1, allowing a nucleophilic attack on the C1' of the ribose to form the product. After dissociation, two additional enzymatic reactions on the tRNA convert PreQ1 to queuine (Q), resulting in the hypermodified nucleoside queuosine (7-(((4,5-cis-dihydroxy-2-cyclopenten-1-yl)amino)methyl)-7-deazaguanosine). In Thermosipho africanus (strain TCF52B), this protein is Queuine tRNA-ribosyltransferase.